The following is a 115-amino-acid chain: Insulin (115 aa).

Positions 1-26 (MALSPFLAAVIPLVLLLSRAPPSADT) are cleaved as a signal peptide. Disulfide bonds link Cys33–Cys101, Cys45–Cys114, and Cys100–Cys105. The propeptide at 60–92 (DTGALAAFLPLAYAEDNESQDDESIGINEVLKS) is c peptide.

The protein belongs to the insulin family. As to quaternary structure, heterodimer of a B chain and an A chain linked by two disulfide bonds.

The protein resides in the secreted. Functionally, insulin decreases blood glucose concentration. It increases cell permeability to monosaccharides, amino acids and fatty acids. It accelerates glycolysis, the pentose phosphate cycle, and glycogen synthesis in liver. In Myxine glutinosa (Atlantic hagfish), this protein is Insulin (ins).